The sequence spans 232 residues: Large ribosomal subunit protein uL1 (232 aa).

This sequence belongs to the universal ribosomal protein uL1 family. Part of the 50S ribosomal subunit.

Functionally, binds directly to 23S rRNA. The L1 stalk is quite mobile in the ribosome, and is involved in E site tRNA release. In terms of biological role, protein L1 is also a translational repressor protein, it controls the translation of the L11 operon by binding to its mRNA. The sequence is that of Large ribosomal subunit protein uL1 from Phocaeicola vulgatus (strain ATCC 8482 / DSM 1447 / JCM 5826 / CCUG 4940 / NBRC 14291 / NCTC 11154) (Bacteroides vulgatus).